A 66-amino-acid chain; its full sequence is Large ribosomal subunit protein bL35 (66 aa).

Basic residues predominate over residues 1-16 (MPKQKTHRASAKRFKR). The tract at residues 1-21 (MPKQKTHRASAKRFKRTGSGG) is disordered.

The protein belongs to the bacterial ribosomal protein bL35 family.

In Streptococcus pneumoniae serotype 2 (strain D39 / NCTC 7466), this protein is Large ribosomal subunit protein bL35.